A 413-amino-acid chain; its full sequence is Multifunctional CCA protein (413 aa).

Residues Gly-8 and Arg-11 each coordinate ATP. The CTP site is built by Gly-8 and Arg-11. Asp-21 and Asp-23 together coordinate Mg(2+). Residues Arg-91, Arg-143, and Arg-146 each contribute to the ATP site. CTP-binding residues include Arg-91, Arg-143, and Arg-146. Positions 232 to 333 (TGVHVMMVVD…VRFFERSDAL (102 aa)) constitute an HD domain.

Belongs to the tRNA nucleotidyltransferase/poly(A) polymerase family. Bacterial CCA-adding enzyme type 1 subfamily. In terms of assembly, monomer. Can also form homodimers and oligomers. Mg(2+) serves as cofactor. It depends on Ni(2+) as a cofactor.

It carries out the reaction a tRNA precursor + 2 CTP + ATP = a tRNA with a 3' CCA end + 3 diphosphate. The enzyme catalyses a tRNA with a 3' CCA end + 2 CTP + ATP = a tRNA with a 3' CCACCA end + 3 diphosphate. Functionally, catalyzes the addition and repair of the essential 3'-terminal CCA sequence in tRNAs without using a nucleic acid template. Adds these three nucleotides in the order of C, C, and A to the tRNA nucleotide-73, using CTP and ATP as substrates and producing inorganic pyrophosphate. tRNA 3'-terminal CCA addition is required both for tRNA processing and repair. Also involved in tRNA surveillance by mediating tandem CCA addition to generate a CCACCA at the 3' terminus of unstable tRNAs. While stable tRNAs receive only 3'-terminal CCA, unstable tRNAs are marked with CCACCA and rapidly degraded. This is Multifunctional CCA protein from Burkholderia ambifaria (strain MC40-6).